The chain runs to 343 residues: L-threonine 3-dehydrogenase (343 aa).

Residue C40 coordinates Zn(2+). Active-site charge relay system residues include T42 and H45. Zn(2+) is bound by residues H65, E66, C95, C98, C101, and C109. Residues I177, D197, R202, 264-266 (LGI), and 288-289 (IY) each bind NAD(+).

It belongs to the zinc-containing alcohol dehydrogenase family. In terms of assembly, homotetramer. Zn(2+) is required as a cofactor.

The protein resides in the cytoplasm. It catalyses the reaction L-threonine + NAD(+) = (2S)-2-amino-3-oxobutanoate + NADH + H(+). Its pathway is amino-acid degradation; L-threonine degradation via oxydo-reductase pathway; glycine from L-threonine: step 1/2. Catalyzes the NAD(+)-dependent oxidation of L-threonine to 2-amino-3-ketobutyrate. This Photobacterium profundum (strain SS9) protein is L-threonine 3-dehydrogenase.